Consider the following 253-residue polypeptide: uncharacterized protein (253 aa).

The N-terminal stretch at 1-15 is a signal peptide; the sequence is MNRVILFHFHFFKNA.

This is an uncharacterized protein from Archaeoglobus fulgidus (strain ATCC 49558 / DSM 4304 / JCM 9628 / NBRC 100126 / VC-16).